The primary structure comprises 116 residues: Cyclin-dependent protein kinase inhibitor SMR9 (116 aa).

A compositionally biased stretch (basic residues) spans 1–22 (MASKGKKPLRRTTTRRRKRSHF). Positions 1-62 (MASKGKKPLR…PVSAESGCCT (62 aa)) are disordered. Residues 35 to 56 (VTSTSSTSTSPTSTATPSPVSA) show a composition bias toward low complexity.

In terms of biological role, probable cyclin-dependent protein kinase (CDK) inhibitor that functions as a repressor of mitosis in the endoreduplication cell cycle. The sequence is that of Cyclin-dependent protein kinase inhibitor SMR9 from Arabidopsis thaliana (Mouse-ear cress).